A 392-amino-acid polypeptide reads, in one-letter code: MSEKDNNLTPWQQKHLEYQKRKAEEAKKEKKANQPKKVHFSSPFLKSLPKTEKNFDDTRDEAESAELLEEGFETNNEETQSSEAPIENEKIIAQLEQLSQENEYEYEEEQIKRPSRFFSLFKGSAPLLKKMWPALAIVVLVFVGSLYLISPLSKISTFSVSGNANESSEQVALASGIQTSDSIFNILNNKEKIEATIEQKFPRISAVTINYHFPNRFEAIVKEHTNSVYVKRNDQTYLVLNNGYVITTPVDATKLEKLPVLQNFNDEEVKTFVNAYETLKPAIKSLMTNVTKTPTDATKDFIAIDMSDGNQVRVSLSQLADRLPYYPSVAKQVQAPQVVDMEAGIYTKPKAAYDAYLSQLSTSKSASISAQNAKKTDASSENTAQSTTTSSN.

Positions 1-87 (MSEKDNNLTP…ETQSSEAPIE (87 aa)) are disordered. The Cytoplasmic portion of the chain corresponds to 1 to 131 (MSEKDNNLTP…KGSAPLLKKM (131 aa)). The span at 14-32 (KHLEYQKRKAEEAKKEKKA) shows a compositional bias: basic and acidic residues. Residues 58–76 (TRDEAESAELLEEGFETNN) show a composition bias toward acidic residues. A helical membrane pass occupies residues 132–152 (WPALAIVVLVFVGSLYLISPL). A POTRA domain is found at 153–224 (SKISTFSVSG…NRFEAIVKEH (72 aa)). Over 153–392 (SKISTFSVSG…TAQSTTTSSN (240 aa)) the chain is Extracellular. The segment at 368–392 (ISAQNAKKTDASSENTAQSTTTSSN) is disordered.

It belongs to the FtsQ/DivIB family. DivIB subfamily.

Its subcellular location is the cell membrane. Its function is as follows. Cell division protein that may be involved in stabilizing or promoting the assembly of the division complex. In Lactococcus lactis subsp. lactis (strain IL1403) (Streptococcus lactis), this protein is Cell division protein DivIB.